Consider the following 197-residue polypeptide: Cytochrome c biogenesis ATP-binding export protein CcmA (197 aa).

The ABC transporter domain maps to 1-196 (MSMLSLHQLQ…VIKSAQILQL (196 aa)). Residue 35 to 42 (GANGSGKS) participates in ATP binding.

This sequence belongs to the ABC transporter superfamily. CcmA exporter (TC 3.A.1.107) family. In terms of assembly, the complex is composed of two ATP-binding proteins (CcmA) and two transmembrane proteins (CcmB).

It localises to the cell inner membrane. It carries out the reaction heme b(in) + ATP + H2O = heme b(out) + ADP + phosphate + H(+). Its function is as follows. Part of the ABC transporter complex CcmAB involved in the biogenesis of c-type cytochromes; once thought to export heme, this seems not to be the case, but its exact role is uncertain. Responsible for energy coupling to the transport system. This Rickettsia typhi (strain ATCC VR-144 / Wilmington) protein is Cytochrome c biogenesis ATP-binding export protein CcmA.